The chain runs to 272 residues: Putative phosphoenolpyruvate synthase regulatory protein (272 aa).

ADP is bound at residue 152–159; sequence GVSRSGKT.

Belongs to the pyruvate, phosphate/water dikinase regulatory protein family. PSRP subfamily.

It carries out the reaction [pyruvate, water dikinase] + ADP = [pyruvate, water dikinase]-phosphate + AMP + H(+). It catalyses the reaction [pyruvate, water dikinase]-phosphate + phosphate + H(+) = [pyruvate, water dikinase] + diphosphate. Functionally, bifunctional serine/threonine kinase and phosphorylase involved in the regulation of the phosphoenolpyruvate synthase (PEPS) by catalyzing its phosphorylation/dephosphorylation. This chain is Putative phosphoenolpyruvate synthase regulatory protein, found in Methylibium petroleiphilum (strain ATCC BAA-1232 / LMG 22953 / PM1).